The chain runs to 205 residues: Proteasome subunit beta type-3 (205 aa).

Ser-31 carries the phosphoserine modification. Lys-70 is covalently cross-linked (Glycyl lysine isopeptide (Lys-Gly) (interchain with G-Cter in ubiquitin)).

Belongs to the peptidase T1B family. As to quaternary structure, the 26S proteasome consists of a 20S proteasome core and two 19S regulatory subunits. The 20S proteasome core is composed of 28 subunits that are arranged in four stacked rings, resulting in a barrel-shaped structure. The two end rings are each formed by seven alpha subunits, and the two central rings are each formed by seven beta subunits. The catalytic chamber with the active sites is on the inside of the barrel.

It is found in the cytoplasm. Its subcellular location is the nucleus. Its function is as follows. Non-catalytic component of the proteasome which degrades poly-ubiquitinated proteins in the cytoplasm and in the nucleus. It is essential for the regulated turnover of proteins and for the removal of misfolded proteins. The proteasome is a multicatalytic proteinase complex that is characterized by its ability to cleave peptides with Arg, Phe, Tyr, Leu, and Glu adjacent to the leaving group at neutral or slightly basic pH. It has an ATP-dependent proteolytic activity. This subunit may participate in the trypsin-like activity of the enzyme complex. The polypeptide is Proteasome subunit beta type-3 (PUP3) (Saccharomyces cerevisiae (strain ATCC 204508 / S288c) (Baker's yeast)).